A 373-amino-acid polypeptide reads, in one-letter code: Putative glutamate--cysteine ligase 2-1 (373 aa).

It belongs to the glutamate--cysteine ligase type 2 family. YbdK subfamily.

It carries out the reaction L-cysteine + L-glutamate + ATP = gamma-L-glutamyl-L-cysteine + ADP + phosphate + H(+). In terms of biological role, ATP-dependent carboxylate-amine ligase which exhibits weak glutamate--cysteine ligase activity. The sequence is that of Putative glutamate--cysteine ligase 2-1 from Legionella pneumophila (strain Lens).